We begin with the raw amino-acid sequence, 388 residues long: Calreticulin (388 aa).

The N-terminal stretch at 1-17 (MQLSLLVGLVCFSAINA) is a signal peptide. The cysteines at positions 103 and 135 are disulfide-linked. 4 residues coordinate an alpha-D-glucoside: Tyr107, Lys109, Tyr126, and Asp133. 7 repeat units span residues 189–200 (AESGELEADWDF), 208–219 (DPDAKKPEDWDE), 225–236 (DEDDKKPEDWDK), 242–253 (DPDAKKPEDWDD), 257–267 (GEWEPPMVDNP), 271–281 (GEWKPKQKKNP), and 285–295 (GKWIHPEIEIP). Residues 189-253 (AESGELEADW…DAKKPEDWDD (65 aa)) are 4 X approximate repeats. The segment at 193 to 282 (ELEADWDFLP…WKPKQKKNPA (90 aa)) is disordered. Residues 205 to 215 (KIKDPDAKKPE) are compositionally biased toward basic and acidic residues. A compositionally biased stretch (acidic residues) spans 216–227 (DWDEREFIDDED). The span at 228–249 (DKKPEDWDKPEHIPDPDAKKPE) shows a compositional bias: basic and acidic residues. Residues 250 to 259 (DWDDEMDGEW) are compositionally biased toward acidic residues. The 3 X approximate repeats stretch occupies residues 257 to 295 (GEWEPPMVDNPEYKGEWKPKQKKNPAYKGKWIHPEIEIP). Asp315 serves as a coordination point for an alpha-D-glucoside. Residues 349-388 (REGEKKKGKKTKKQKKKEKNEKIKKEKMKKRKRANRKKKK) are disordered. 2 stretches are compositionally biased toward basic residues: residues 354–365 (KKGKKTKKQKKK) and 373–388 (KEKM…KKKK).

This sequence belongs to the calreticulin family.

The protein localises to the endoplasmic reticulum lumen. In terms of biological role, molecular calcium-binding chaperone promoting folding, oligomeric assembly and quality control in the ER via the calreticulin/calnexin cycle. This lectin may interact transiently with almost all of the monoglucosylated glycoproteins that are synthesized in the ER. The polypeptide is Calreticulin (crt-1) (Onchocerca volvulus).